The primary structure comprises 417 residues: NADH-quinone oxidoreductase subunit D (417 aa).

The protein belongs to the complex I 49 kDa subunit family. NDH-1 is composed of 14 different subunits. Subunits NuoB, C, D, E, F, and G constitute the peripheral sector of the complex.

The protein resides in the cell inner membrane. It carries out the reaction a quinone + NADH + 5 H(+)(in) = a quinol + NAD(+) + 4 H(+)(out). Functionally, NDH-1 shuttles electrons from NADH, via FMN and iron-sulfur (Fe-S) centers, to quinones in the respiratory chain. The immediate electron acceptor for the enzyme in this species is believed to be ubiquinone. Couples the redox reaction to proton translocation (for every two electrons transferred, four hydrogen ions are translocated across the cytoplasmic membrane), and thus conserves the redox energy in a proton gradient. The sequence is that of NADH-quinone oxidoreductase subunit D from Paraburkholderia phytofirmans (strain DSM 17436 / LMG 22146 / PsJN) (Burkholderia phytofirmans).